The chain runs to 60 residues: MRKLRGGQTKETRKQRQERKEENLKIQQQMKTIVLPTIGVIFLCIVVYVFLKTRPRYEEL.

Residues 1-23 (MRKLRGGQTKETRKQRQERKEEN) form a disordered region. Positions 8–23 (QTKETRKQRQERKEEN) are enriched in basic and acidic residues. A coiled-coil region spans residues 8-33 (QTKETRKQRQERKEENLKIQQQMKTI). A helical transmembrane segment spans residues 31 to 51 (KTIVLPTIGVIFLCIVVYVFL).

It belongs to the SMCO4 family.

The protein resides in the membrane. In Anopheles gambiae (African malaria mosquito), this protein is Single-pass membrane and coiled-coil domain-containing protein 4 homolog.